We begin with the raw amino-acid sequence, 940 residues long: Protein translocase subunit SecA (940 aa).

Residues Gln-86, 104–108 (GEGKT), and Asp-494 contribute to the ATP site. The disordered stretch occupies residues 884–940 (ATAKAQKDQQAEDAVLVGEDEPETPQGPPARGAFGQPTGASSAPQNREERRKADRRK). Residues 929–940 (NREERRKADRRK) show a composition bias toward basic and acidic residues.

The protein belongs to the SecA family. In terms of assembly, monomer and homodimer. Part of the essential Sec protein translocation apparatus which comprises SecA, SecYEG and auxiliary proteins SecDF. Other proteins may also be involved.

The protein localises to the cell membrane. Its subcellular location is the cytoplasm. It carries out the reaction ATP + H2O + cellular proteinSide 1 = ADP + phosphate + cellular proteinSide 2.. Part of the Sec protein translocase complex. Interacts with the SecYEG preprotein conducting channel. Has a central role in coupling the hydrolysis of ATP to the transfer of proteins into and across the cell membrane, serving as an ATP-driven molecular motor driving the stepwise translocation of polypeptide chains across the membrane. This Clavibacter sepedonicus (Clavibacter michiganensis subsp. sepedonicus) protein is Protein translocase subunit SecA.